A 195-amino-acid chain; its full sequence is Dephospho-CoA kinase (195 aa).

Residues 2–195 (IISLTGGIGV…DIVDSLNLNT (194 aa)) form the DPCK domain. 10–15 (GVGKSF) is a binding site for ATP.

The protein belongs to the CoaE family.

It localises to the cytoplasm. It carries out the reaction 3'-dephospho-CoA + ATP = ADP + CoA + H(+). The protein operates within cofactor biosynthesis; coenzyme A biosynthesis; CoA from (R)-pantothenate: step 5/5. Functionally, catalyzes the phosphorylation of the 3'-hydroxyl group of dephosphocoenzyme A to form coenzyme A. The protein is Dephospho-CoA kinase of Wolbachia pipientis wMel.